The chain runs to 283 residues: Pantothenate synthetase (283 aa).

30–37 (MGNLHDGH) contacts ATP. Histidine 37 acts as the Proton donor in catalysis. Residue glutamine 61 participates in (R)-pantoate binding. Residue glutamine 61 coordinates beta-alanine. Residue 149-152 (GEKD) participates in ATP binding. Glutamine 155 is a (R)-pantoate binding site. Position 186-189 (186-189 (LSSR)) interacts with ATP.

This sequence belongs to the pantothenate synthetase family. Homodimer.

The protein localises to the cytoplasm. The enzyme catalyses (R)-pantoate + beta-alanine + ATP = (R)-pantothenate + AMP + diphosphate + H(+). The protein operates within cofactor biosynthesis; (R)-pantothenate biosynthesis; (R)-pantothenate from (R)-pantoate and beta-alanine: step 1/1. Catalyzes the condensation of pantoate with beta-alanine in an ATP-dependent reaction via a pantoyl-adenylate intermediate. The protein is Pantothenate synthetase of Escherichia coli O45:K1 (strain S88 / ExPEC).